The following is a 284-amino-acid chain: 4-hydroxybenzoate octaprenyltransferase (284 aa).

The next 9 helical transmembrane spans lie at 19 to 39 (IGSL…AQGL), 42 to 62 (LRVL…GCVI), 93 to 113 (LLLF…MNTL), 114 to 134 (TIQL…MKRF), 136 to 156 (HLPQ…AWAA), 158 to 178 (ANTL…WTIA), 210 to 230 (IIGL…QGLA), 233 to 253 (TSYY…QHLI), and 264 to 284 (AFLN…LSVW).

It belongs to the UbiA prenyltransferase family. It depends on Mg(2+) as a cofactor.

It is found in the cell inner membrane. It catalyses the reaction all-trans-octaprenyl diphosphate + 4-hydroxybenzoate = 4-hydroxy-3-(all-trans-octaprenyl)benzoate + diphosphate. Its pathway is cofactor biosynthesis; ubiquinone biosynthesis. Functionally, catalyzes the prenylation of para-hydroxybenzoate (PHB) with an all-trans polyprenyl group. Mediates the second step in the final reaction sequence of ubiquinone-8 (UQ-8) biosynthesis, which is the condensation of the polyisoprenoid side chain with PHB, generating the first membrane-bound Q intermediate 3-octaprenyl-4-hydroxybenzoate. The polypeptide is 4-hydroxybenzoate octaprenyltransferase (Vibrio cholerae serotype O1 (strain ATCC 39541 / Classical Ogawa 395 / O395)).